The sequence spans 101 residues: MGGFNLNEMMAAAKQHAEELQKKMAQTVIEATAGGGSVTVKMNGQKQLLSIKIDPEVVKSGDVEMLQDLVTAAVNEGSRRVDQAMQSNLSGMMGGMGLPGF.

The protein belongs to the YbaB/EbfC family. In terms of assembly, homodimer.

Its subcellular location is the cytoplasm. The protein localises to the nucleoid. In terms of biological role, binds to DNA and alters its conformation. May be involved in regulation of gene expression, nucleoid organization and DNA protection. The protein is Nucleoid-associated protein Acid345_1974 of Koribacter versatilis (strain Ellin345).